The following is a 209-amino-acid chain: CASP-like protein 2A2 (209 aa).

Residues 1–37 (MSKTAGVGRLGGARAADAAQQQQLAAGDAAVARAARP) lie on the Cytoplasmic side of the membrane. Residues 38-58 (IETLLRAAPLVLCVAAMTLML) form a helical membrane-spanning segment. At 59–79 (RDQQSNEYGTVAYSDLGGFKY) the chain is on the extracellular side. Residues 80–100 (LVYANGLCAAYSLASAFYTAV) form a helical membrane-spanning segment. Residues 101 to 109 (PRPATVSRS) lie on the Cytoplasmic side of the membrane. A helical membrane pass occupies residues 110–130 (WVVFLLDQVFTYLILAAGAAA). The Extracellular portion of the chain corresponds to 131 to 161 (AELLYLAYNGDKEVTWSEACGVFGSFCRQAR). The helical transmembrane segment at 162-182 (ISVAITFGAVLCFILLSLLSS) threads the bilayer. The Cytoplasmic segment spans residues 183–209 (YRLFSAYEAPPPSALGSKGVEIAAYPR).

The protein belongs to the Casparian strip membrane proteins (CASP) family. Homodimer and heterodimers.

It is found in the cell membrane. The chain is CASP-like protein 2A2 from Zea mays (Maize).